A 204-amino-acid chain; its full sequence is MSIFEYNGSALVAMVGKNCFAIASDRRLGVQLQTIATDFQRIFKIHDKLYVGLSGLATDVQTLYQRFAFRHKLYQLREERNMRPETFASLVSALLYEKRFGPYFCQPVIAGLGEDDKPFICTMDSIGAKELAKDFVVAGTAAESLYGACESMYKPDMEPEELFETISQALLSSIDRDCLSGWGGHVYVVSPNQVIERTLKGRMD.

It belongs to the peptidase T1B family. The 26S proteasome consists of a 20S proteasome core and two 19S regulatory subunits. The 20S proteasome core is composed of 28 subunits that are arranged in four stacked rings, resulting in a barrel-shaped structure. The two end rings are each formed by seven alpha subunits, and the two central rings are each formed by seven beta subunits. The catalytic chamber with the active sites is on the inside of the barrel.

The protein resides in the cytoplasm. It is found in the nucleus. Functionally, non-catalytic component of the proteasome, a multicatalytic proteinase complex which is characterized by its ability to cleave peptides with Arg, Phe, Tyr, Leu, and Glu adjacent to the leaving group at neutral or slightly basic pH. The proteasome has an ATP-dependent proteolytic activity. This Picea mariana (Black spruce) protein is Proteasome subunit beta type-3 (PBC1).